Here is a 369-residue protein sequence, read N- to C-terminus: H-2 class I histocompatibility antigen, K-B alpha chain (369 aa).

A signal peptide spans 1-21; the sequence is MVPCTLLLLLAAALAPTQTRA. An alpha-1 region spans residues 22–111; the sequence is GPHSLRYFVT…LLGYYNQSKG (90 aa). The Extracellular portion of the chain corresponds to 22–305; sequence GPHSLRYFVT…EPPPSTVSNM (284 aa). An N-linked (GlcNAc...) asparagine glycan is attached at N107. Positions 112–203 are alpha-2; it reads GSHTIQVISG…KNGNATLLRT (92 aa). Residues C122 and C185 are joined by a disulfide bond. N-linked (GlcNAc...) asparagine glycosylation occurs at N197. Positions 204–295 are alpha-3; that stretch reads DSPKAHVTHH…GLPEPLTLRW (92 aa). The region spanning 206–294 is the Ig-like C1-type domain; that stretch reads PKAHVTHHSR…QGLPEPLTLR (89 aa). Residues C224 and C280 are joined by a disulfide bond. The segment at 296–305 is connecting peptide; it reads EPPPSTVSNM. Residues 306-328 form a helical membrane-spanning segment; it reads ATVAVLVVLGAAIVTGAVVAFVM. Residues 329-369 lie on the Cytoplasmic side of the membrane; it reads KMRRRNTGGKGGDYALAPGSQTSDLSLPDCKVMVHDPHSLA. Phosphoserine is present on residues S351 and S354.

It belongs to the MHC class I family. As to quaternary structure, heterodimer of an alpha chain and a beta chain (beta-2-microglobulin).

It is found in the membrane. Functionally, involved in the presentation of foreign antigens to the immune system. The chain is H-2 class I histocompatibility antigen, K-B alpha chain (H2-K1) from Mus musculus (Mouse).